The sequence spans 249 residues: 3-deoxy-D-manno-octulosonic acid kinase (249 aa).

The active site involves Asp175.

Belongs to the protein kinase superfamily. KdkA/RfaP family.

It localises to the cell inner membrane. It carries out the reaction an alpha-Kdo-(2-&gt;6)-lipid IVA + ATP = a 4-O-phospho-alpha-Kdo-(2-&gt;6)-lipid IVA + ADP + H(+). It functions in the pathway bacterial outer membrane biogenesis; LPS core biosynthesis. Its function is as follows. Catalyzes the ATP-dependent phosphorylation of the 3-deoxy-D-manno-octulosonic acid (Kdo) residue in Kdo-lipid IV(A) at the 4-OH position. This is 3-deoxy-D-manno-octulosonic acid kinase from Xanthomonas axonopodis pv. citri (strain 306).